The following is a 271-amino-acid chain: Glutamate racemase (271 aa).

Substrate-binding positions include 12–13 (DS) and 44–45 (YG). Residue cysteine 75 is the Proton donor/acceptor of the active site. Residue 76–77 (NS) participates in substrate binding. The Proton donor/acceptor role is filled by cysteine 185. Position 186 to 187 (186 to 187 (TH)) interacts with substrate.

It belongs to the aspartate/glutamate racemases family.

It catalyses the reaction L-glutamate = D-glutamate. The protein operates within cell wall biogenesis; peptidoglycan biosynthesis. Provides the (R)-glutamate required for cell wall biosynthesis. In Mycobacterium bovis (strain ATCC BAA-935 / AF2122/97), this protein is Glutamate racemase.